Consider the following 1366-residue polypeptide: Collagen alpha-2(I) chain (1366 aa).

Positions 1 to 22 are cleaved as a signal peptide; sequence MLSFVDTRTLLLLAVTLCLATC. Gln-23 carries the pyrrolidone carboxylic acid modification. The propeptide at 23 to 79 is N-terminal propeptide; that stretch reads QSLQEETVRKGPAGDRGPRGERGPPGPPGRDGEDGPTGPPGPPGPPGPPGLGGNFAA. Residues 28-44 are compositionally biased toward basic and acidic residues; the sequence is ETVRKGPAGDRGPRGER. The tract at residues 28–1130 is disordered; sequence ETVRKGPAGD…QPRSAPSLRP (1103 aa). A 4-hydroxyproline mark is found at Pro-47, Pro-50, Pro-62, Pro-65, Pro-68, and Pro-71. Residues 59-71 show a composition bias toward pro residues; the sequence is TGPPGPPGPPGPP. Position 80 is a pyrrolidone carboxylic acid (Gln-80). Allysine is present on Lys-84. A compositionally biased stretch (gly residues) spans 84–94; that stretch reads KGVGLGPGPMG. Residues 95–140 show a composition bias toward low complexity; the sequence is LMGPRGPPGAAGAPGPQGFQGPAGEPGEPGQTGPAGARGPAGPPGK. A 4-hydroxyproline mark is found at Pro-102 and Pro-108. Over residues 141 to 155 the composition is skewed to basic and acidic residues; sequence AGEDGHPGKPGRPGE. 5-hydroxylysine; alternate is present on Lys-177. O-linked (Gal...) hydroxylysine; alternate glycosylation occurs at Lys-177. Composition is skewed to low complexity over residues 225–254, 269–293, 300–321, 330–345, 398–410, and 419–434; these read VGAP…SAGP, AVGN…LSGP, PGAN…AGAP, PGPV…RGLV, LRGS…LPGA, and PPGS…VRGP. Residues Pro-420, Pro-441, and Pro-444 each carry the 4-hydroxyproline modification. 2 stretches are compositionally biased toward low complexity: residues 470 to 489 and 513 to 531; these read LPGI…RGEP and AGLA…NGAQ. Over residues 538–547 the composition is skewed to gly residues; sequence GVQGGKGEQG. Composition is skewed to low complexity over residues 594–611, 623–648, 663–710, and 717–737; these read PGES…SRGP, EPGV…RGAA, RGEI…PRGS, and VGPA…QPGA. The segment covering 738-747 has biased composition (basic and acidic residues); the sequence is KGERGAKGPK. Low complexity predominate over residues 752–765; that stretch reads VVGPTGPVGAAGPA. The span at 775–784 shows a compositional bias: gly residues; it reads GSRGDGGPPG. Low complexity-rich tracts occupy residues 786–795, 849–876, 884–932, 956–974, and 983–1001; these read TGFPGAAGRT, SGEA…LGLP, LPGV…NPGN, PVGA…PAGK, and PSGP…PSGP. The segment covering 1005-1016 has biased composition (basic and acidic residues); sequence RGDKGEPGEKGP. Residues 1089-1101 show a composition bias toward pro residues; it reads AGPPGPPGPPGPP. Positions 1120–1366 are cleaved as a propeptide — C-terminal propeptide; that stretch reads DQPRSAPSLR…FVDIGPVCFK (247 aa). One can recognise a Fibrillar collagen NC1 domain in the interval 1133-1366; it reads YEVDATLKSL…FVDIGPVCFK (234 aa). Disulfide bonds link Cys-1163–Cys-1195, Cys-1203–Cys-1364, and Cys-1272–Cys-1317. Ca(2+) is bound by residues Asp-1181, Asn-1183, Gln-1184, Cys-1186, and Asp-1189. N-linked (GlcNAc...) asparagine glycosylation is present at Asn-1267.

Belongs to the fibrillar collagen family. In terms of assembly, trimers of one alpha 2(I) and two alpha 1(I) chains. Interacts (via C-terminus) with TMEM131 (via PapD-L domain); the interaction is direct and is involved in assembly and TRAPPIII ER-to-Golgi transport complex-dependent secretion of collagen. In terms of processing, prolines at the third position of the tripeptide repeating unit (G-X-Y) are hydroxylated in some or all of the chains. As to expression, forms the fibrils of tendon, ligaments and bones. In bones the fibrils are mineralized with calcium hydroxyapatite.

The protein localises to the secreted. The protein resides in the extracellular space. It is found in the extracellular matrix. Its function is as follows. Type I collagen is a member of group I collagen (fibrillar forming collagen). In Homo sapiens (Human), this protein is Collagen alpha-2(I) chain (COL1A2).